The sequence spans 179 residues: MEVRNNNKVNLCFSFDNLRNELSRPYGILFINNKIFLEFISKSIQRGSRIITVGDYVSRVLEENGIVPFLEVIDGKTKRTITQNRAITRNKEYKVTNEAGKIRFEIFEIMENILKDREGGVVFVDGEEDLLVIPVTLSANHGDIVIYGQPNAGAVVIIVNEMIRWRVRDILEKAIVKEC.

GTP is bound by residues Asp55, Val57, Asp74, Lys76, and Glu128.

This sequence belongs to the GTP-dependent DPCK family.

It catalyses the reaction 3'-dephospho-CoA + GTP = GDP + CoA + H(+). It functions in the pathway cofactor biosynthesis; coenzyme A biosynthesis. Its function is as follows. Catalyzes the GTP-dependent phosphorylation of the 3'-hydroxyl group of dephosphocoenzyme A to form coenzyme A (CoA). In Saccharolobus solfataricus (strain ATCC 35092 / DSM 1617 / JCM 11322 / P2) (Sulfolobus solfataricus), this protein is GTP-dependent dephospho-CoA kinase.